A 309-amino-acid chain; its full sequence is N(5)-(carboxyethyl)ornithine synthase (309 aa).

Pyruvate-binding residues include Arg-15, Lys-71, and His-92. NADP(+) is bound at residue 171–176; that stretch reads GSGNVA.

The protein belongs to the AlaDH/PNT family. CEOS subfamily. In terms of assembly, homotetramer.

It carries out the reaction N(5)-[1(S)-1-carboxyethyl]-L-ornithine + NADP(+) + H2O = L-ornithine + pyruvate + NADPH + H(+). Functionally, catalyzes the NADPH-dependent reductive condensation between pyruvic acid and the side chain amino group of L-ornithine to form N(5)-(L-1-carboxyethyl)-L-ornithine. To a lesser extent, can also use L-lysine as substrate (yielding N(6)-(L-1-carboxyethyl)-L-lysine). The protein is N(5)-(carboxyethyl)ornithine synthase (ceo) of Lactococcus lactis subsp. lactis (strain IL1403) (Streptococcus lactis).